Consider the following 139-residue polypeptide: Histone H2B (139 aa).

Over residues 1-10 (MAPKAAEKKP) the composition is skewed to basic and acidic residues. The disordered stretch occupies residues 1-47 (MAPKAAEKKPSTGGKAPAGGKAPAEKKEAGKKTAASGEKKKRTKARK). Lysine 8 and lysine 9 each carry N6-acetyllysine; alternate. Glycyl lysine isopeptide (Lys-Gly) (interchain with G-Cter in SUMO); alternate cross-links involve residues lysine 8 and lysine 9. Low complexity predominate over residues 11–22 (STGGKAPAGGKA). Residue lysine 15 is modified to N6-acetyllysine. Lysine 26 is modified (N6-acetyllysine; alternate). A Glycyl lysine isopeptide (Lys-Gly) (interchain with G-Cter in SUMO); alternate cross-link involves residue lysine 26. Lysine 27 is covalently cross-linked (Glycyl lysine isopeptide (Lys-Gly) (interchain with G-Cter in SUMO)). Lysine 133 participates in a covalent cross-link: Glycyl lysine isopeptide (Lys-Gly) (interchain with G-Cter in ubiquitin).

This sequence belongs to the histone H2B family. As to quaternary structure, the nucleosome is a histone octamer containing two molecules each of H2A, H2B, H3 and H4 assembled in one H3-H4 heterotetramer and two H2A-H2B heterodimers. The octamer wraps approximately 147 bp of DNA. Monoubiquitinated by the UBC2-BRE1 complex to form H2BK123ub1. H2BK123ub1 gives a specific tag for epigenetic transcriptional activation and is also prerequisite for H3K4me and H3K79me formation. H2BK123ub1 also modulates the formation of double-strand breaks during meiosis and is a prerequisite for DNA-damage checkpoint activation. Post-translationally, acetylated by GCN5 to form H2BK11ac and H2BK16ac. H2BK16ac can also be formed by ESA1. Acetylation of N-terminal lysines and particularly formation of H2BK11acK16ac has a positive effect on transcription. In terms of processing, sumoylation to form H2BK6su or H2BK7su, and probably also H2BK16su or H2BK17su, occurs preferentially near the telomeres and represses gene transcription.

It is found in the nucleus. The protein localises to the chromosome. Core component of nucleosome. Nucleosomes wrap and compact DNA into chromatin, limiting DNA accessibility to the cellular machineries which require DNA as a template. Histones thereby play a central role in transcription regulation, DNA repair, DNA replication and chromosomal stability. DNA accessibility is regulated via a complex set of post-translational modifications of histones, also called histone code, and nucleosome remodeling. The sequence is that of Histone H2B (HTB1) from Coccidioides immitis (strain RS) (Valley fever fungus).